Consider the following 1427-residue polypeptide: Double-stranded DNA deaminase toxin A (1427 aa).

2 helical membrane passes run 16-36 and 43-63; these read ALAG…AVAF and FGVA…LLSI. 4 YD repeats span residues 469 to 501, 548 to 584, 720 to 747, and 977 to 1008; these read RVVE…DGRT, YDDA…GPDG, NARG…GRLR, and YDGA…ISRA. The C-terminal effector domain, has cytidine deaminase activity stretch occupies residues 1264–1427; the sequence is IGLNGGANVY…SPKSPTKGGC (164 aa). 3 residues coordinate Zn(2+): His1345, Cys1373, and Cys1376. Residues 1402-1427 form a disordered region; sequence KRGATGETKVFTGNSNSPKSPTKGGC. Over residues 1412-1421 the composition is skewed to polar residues; that stretch reads FTGNSNSPKS.

It belongs to the RHS/WapA nuclease family. The toxic domain forms a 1:1 complex with the DddI immunity protein.

It is found in the membrane. It carries out the reaction a 2'-deoxycytidine in double-stranded DNA + H2O + H(+) = a 2'-deoxyuridine in double-stranded DNA + NH4(+). Functionally, toxic component of a toxin-immunity protein module, which functions as a cellular contact-dependent growth inhibition (CDI) system. CDI modules allow bacteria to communicate with and inhibit the growth of closely related neighboring bacteria in a contact-dependent fashion. Bacteria that have this module inhibit or kill bacteria without it, giving them a growth advantage. Probably specifically inhibited by cognate immunity protein DddI. The C-terminal 163 residue fragment has double-stranded DNA cytidine deaminase activity; it does not deaminate ssDNA, ssRNA or dsRNA. Leads to C:G to T:A conversions in deaminated DNA. Preferentially deaminates 5'-TC-3' substrates. The chain is Double-stranded DNA deaminase toxin A from Burkholderia cenocepacia (strain H111).